A 90-amino-acid polypeptide reads, in one-letter code: WAP four-disulfide core domain protein 12 (90 aa).

Residues 1-23 (MGSSSFLVLMVSLALVTLVAVEG) form the signal peptide. The WAP domain occupies 27–74 (GIEKAGVCPADNVRCFKSDPPQCHTDQDCLGERKCCYLHCGFKCVIPV). Cystine bridges form between Cys34–Cys62, Cys41–Cys66, Cys49–Cys61, and Cys55–Cys70.

Its subcellular location is the secreted. In terms of biological role, antibacterial protein. Putative acid-stable proteinase inhibitor. This chain is WAP four-disulfide core domain protein 12 (WFDC12), found in Gorilla gorilla gorilla (Western lowland gorilla).